A 159-amino-acid polypeptide reads, in one-letter code: 3-hydroxyacyl-[acyl-carrier-protein] dehydratase FabZ (159 aa).

Histidine 59 is a catalytic residue.

Belongs to the thioester dehydratase family. FabZ subfamily.

Its subcellular location is the cytoplasm. It catalyses the reaction a (3R)-hydroxyacyl-[ACP] = a (2E)-enoyl-[ACP] + H2O. Involved in unsaturated fatty acids biosynthesis. Catalyzes the dehydration of short chain beta-hydroxyacyl-ACPs and long chain saturated and unsaturated beta-hydroxyacyl-ACPs. The protein is 3-hydroxyacyl-[acyl-carrier-protein] dehydratase FabZ of Caulobacter vibrioides (strain ATCC 19089 / CIP 103742 / CB 15) (Caulobacter crescentus).